A 1755-amino-acid polypeptide reads, in one-letter code: Transposon Ty1-MR2 Gag-Pol polyprotein (1755 aa).

Polar residues-rich tracts occupy residues 1–10, 48–60, and 127–152; these read MESQQLSNYP, TKANSQQTTTPAS, and QSQFPQYPSSVGTPLSTPSPESGNTF. Disordered regions lie at residues 1 to 93, 126 to 173, and 352 to 421; these read MESQ…MMTQ, PQSQ…RPPP, and GSRN…SKST. The span at 153–165 shows a compositional bias: low complexity; the sequence is TDSSSADSDMTST. An RNA-binding region spans residues 299–401; sequence NNGIHINNKV…NSKSKTARAH (103 aa). The segment covering 402 to 418 has biased composition (low complexity); sequence NVSTSNNSPSTDNDSIS. The residue at position 416 (Ser416) is a Phosphoserine. The For protease activity; shared with dimeric partner role is filled by Asp461. The interval 583–640 is integrase-type zinc finger-like; sequence NVHTSESTRKYPYPFIHRMLAHANAQTIRYSLKNNTITYFNESDVDWSSAIDYQCPDC. Residues 660-835 form the Integrase catalytic domain; the sequence is NSYEPFQYLH…AGLDISTLLP (176 aa). Positions 671 and 736 each coordinate Mg(2+). Disordered stretches follow at residues 956–1087, 1092–1111, and 1130–1186; these read SKAV…ETEK, RSPSIDASPPENNSSHNIVP, and DLPL…EDNE. Low complexity predominate over residues 960-969; sequence SPTDSTPPST. The segment covering 1005–1015 has biased composition (polar residues); it reads STPQISNIEST. Positions 1038-1053 are enriched in basic and acidic residues; the sequence is ESSHASKSKDFRHSDS. Composition is skewed to polar residues over residues 1054–1082 and 1101–1111; these read YSENETNHTNVPISSTGGTNNKTVPQISD and PENNSSHNIVP. A Bipartite nuclear localization signal motif is present at residues 1178–1212; the sequence is KKRSLEDNETEIKVSRDTWNTKNMRSLEPPRSKKR. A Reverse transcriptase Ty1/copia-type domain is found at 1338–1476; it reads NNYYITQLDI…DILGLEIKYQ (139 aa). 6 residues coordinate Mg(2+): Asp1346, Asp1427, Asp1428, Asp1610, Glu1652, and Asp1685. The RNase H Ty1/copia-type domain maps to 1610 to 1752; sequence DASYGNQPYY…IKTFKLLTNK (143 aa).

The capsid protein forms a homotrimer, from which the VLPs are assembled. The protease is a homodimer, whose active site consists of two apposed aspartic acid residues. In terms of processing, initially, virus-like particles (VLPs) are composed of the structural unprocessed proteins Gag and Gag-Pol, and also contain the host initiator methionine tRNA (tRNA(i)-Met) which serves as a primer for minus-strand DNA synthesis, and a dimer of genomic Ty RNA. Processing of the polyproteins occurs within the particle and proceeds by an ordered pathway, called maturation. First, the protease (PR) is released by autocatalytic cleavage of the Gag-Pol polyprotein yielding capsid protein p45 and a Pol-p154 precursor protein. This cleavage is a prerequisite for subsequent processing of Pol-p154 at the remaining sites to release the mature structural and catalytic proteins. Maturation takes place prior to the RT reaction and is required to produce transposition-competent VLPs.

The protein localises to the cytoplasm. Its subcellular location is the nucleus. It carries out the reaction DNA(n) + a 2'-deoxyribonucleoside 5'-triphosphate = DNA(n+1) + diphosphate. It catalyses the reaction Endonucleolytic cleavage to 5'-phosphomonoester.. Capsid protein (CA) is the structural component of the virus-like particle (VLP), forming the shell that encapsulates the retrotransposons dimeric RNA genome. The particles are assembled from trimer-clustered units and there are holes in the capsid shells that allow for the diffusion of macromolecules. CA also has nucleocapsid-like chaperone activity, promoting primer tRNA(i)-Met annealing to the multipartite primer-binding site (PBS), dimerization of Ty1 RNA and initiation of reverse transcription. Its function is as follows. The aspartyl protease (PR) mediates the proteolytic cleavages of the Gag and Gag-Pol polyproteins after assembly of the VLP. In terms of biological role, reverse transcriptase/ribonuclease H (RT) is a multifunctional enzyme that catalyzes the conversion of the retro-elements RNA genome into dsDNA within the VLP. The enzyme displays a DNA polymerase activity that can copy either DNA or RNA templates, and a ribonuclease H (RNase H) activity that cleaves the RNA strand of RNA-DNA heteroduplexes during plus-strand synthesis and hydrolyzes RNA primers. The conversion leads to a linear dsDNA copy of the retrotransposon that includes long terminal repeats (LTRs) at both ends. Functionally, integrase (IN) targets the VLP to the nucleus, where a subparticle preintegration complex (PIC) containing at least integrase and the newly synthesized dsDNA copy of the retrotransposon must transit the nuclear membrane. Once in the nucleus, integrase performs the integration of the dsDNA into the host genome. This chain is Transposon Ty1-MR2 Gag-Pol polyprotein (TY1B-MR2), found in Saccharomyces cerevisiae (strain ATCC 204508 / S288c) (Baker's yeast).